We begin with the raw amino-acid sequence, 158 residues long: Protein ORF4 (158 aa).

Functionally, acts by interacting with multiple viral and host proteins to enhance the activity of viral RNA-dependent RNA polymerase. This chain is Protein ORF4, found in Hepatitis E virus genotype 1 (isolate Human/Pakistan/Sar-55) (HEV-1).